The following is a 400-amino-acid chain: GDNF family receptor alpha-3 (400 aa).

Residues 1–31 (MVRPLNPRPLPPVVLMLLLLLPPSPLPLAAG) form the signal peptide. An intrachain disulfide couples cysteine 51 to cysteine 57. Asparagine 95 and asparagine 148 each carry an N-linked (GlcNAc...) asparagine glycan. Cystine bridges form between cysteine 162/cysteine 218, cysteine 169/cysteine 175, cysteine 186/cysteine 196, cysteine 191/cysteine 239, cysteine 220/cysteine 227, cysteine 248/cysteine 316, cysteine 255/cysteine 261, cysteine 272/cysteine 288, cysteine 281/cysteine 340, and cysteine 318/cysteine 328. A glycan (N-linked (GlcNAc...) asparagine) is linked at asparagine 309. Residue asparagine 374 is the site of GPI-anchor amidated asparagine attachment. Positions 375 to 400 (PAVRPQPWVPSLFSCTLPLILLLSLW) are cleaved as a propeptide — removed in mature form.

It belongs to the GDNFR family. In terms of assembly, interacts with ARTN ligand and RET: forms a 2:2:2 ternary complex composed of ARTN ligand, GFRA3 and RET receptor. Interacts with SORL1. In terms of processing, N-glycosylated. In terms of tissue distribution, widely expressed in adult and fetus which exhibit a similar pattern. Essentially not expressed in the central nervous system, but highly expressed in several sensory and sympathetic ganglia of the peripheral nervous system. Moderate expression in many non-neuronal tissues, particularly those of the digestive and urogenital systems, but high expression in stomach and appendix. Several types of glandular tissues show low expression. Very low or no expression detected in the hematopoietic system.

It localises to the cell membrane. Receptor for artemin (ARTN), a growth factor that supports the survival of sensory and sympathetic peripheral neurons. ARTN-binding leads to autophosphorylation and activation of the RET receptor. This chain is GDNF family receptor alpha-3 (GFRA3), found in Homo sapiens (Human).